The following is a 448-amino-acid chain: Tubulin beta-1 chain (448 aa).

8 residues coordinate GTP: Gln-11, Glu-69, Ser-138, Gly-142, Thr-143, Gly-144, Asn-204, and Asn-226. Glu-69 is a Mg(2+) binding site. The segment at 427 to 448 (DATADEEGDLQEGESEYIEQEE) is disordered. Positions 429–448 (TADEEGDLQEGESEYIEQEE) are enriched in acidic residues.

It belongs to the tubulin family. Dimer of alpha and beta chains. A typical microtubule is a hollow water-filled tube with an outer diameter of 25 nm and an inner diameter of 15 nM. Alpha-beta heterodimers associate head-to-tail to form protofilaments running lengthwise along the microtubule wall with the beta-tubulin subunit facing the microtubule plus end conferring a structural polarity. Microtubules usually have 13 protofilaments but different protofilament numbers can be found in some organisms and specialized cells. Mg(2+) is required as a cofactor.

It localises to the cytoplasm. The protein resides in the cytoskeleton. In terms of biological role, tubulin is the major constituent of microtubules, a cylinder consisting of laterally associated linear protofilaments composed of alpha- and beta-tubulin heterodimers. Microtubules grow by the addition of GTP-tubulin dimers to the microtubule end, where a stabilizing cap forms. Below the cap, tubulin dimers are in GDP-bound state, owing to GTPase activity of alpha-tubulin. This Brugia pahangi (Filarial nematode worm) protein is Tubulin beta-1 chain.